The sequence spans 178 residues: ATP synthase subunit b (178 aa).

A helical transmembrane segment spans residues 30 to 50; that stretch reads FFFVLAIFLIVLAVIGTFVVP.

It belongs to the ATPase B chain family. As to quaternary structure, F-type ATPases have 2 components, F(1) - the catalytic core - and F(0) - the membrane proton channel. F(1) has five subunits: alpha(3), beta(3), gamma(1), delta(1), epsilon(1). F(0) has three main subunits: a(1), b(2) and c(10-14). The alpha and beta chains form an alternating ring which encloses part of the gamma chain. F(1) is attached to F(0) by a central stalk formed by the gamma and epsilon chains, while a peripheral stalk is formed by the delta and b chains.

Its subcellular location is the cell membrane. In terms of biological role, f(1)F(0) ATP synthase produces ATP from ADP in the presence of a proton or sodium gradient. F-type ATPases consist of two structural domains, F(1) containing the extramembraneous catalytic core and F(0) containing the membrane proton channel, linked together by a central stalk and a peripheral stalk. During catalysis, ATP synthesis in the catalytic domain of F(1) is coupled via a rotary mechanism of the central stalk subunits to proton translocation. Functionally, component of the F(0) channel, it forms part of the peripheral stalk, linking F(1) to F(0). The chain is ATP synthase subunit b from Mycobacterium avium (strain 104).